We begin with the raw amino-acid sequence, 740 residues long: Catalase-peroxidase (740 aa).

Residues 1 to 44 (MSDSCPVAHDGNTASTSESENPAIPSPTPTGNRPRTNRDWWPNQ) form a disordered region. Residues 109–231 (WHAAGTYRIA…LGAVQMGLIY (123 aa)) constitute a cross-link (tryptophyl-tyrosyl-methioninium (Trp-Tyr) (with M-257)). Catalysis depends on H110, which acts as the Proton acceptor. Residues 231–257 (YVNPEGPNGQPDPVAAARDIRETFARM) constitute a cross-link (tryptophyl-tyrosyl-methioninium (Tyr-Met) (with W-109)). Residue H272 participates in heme b binding.

The protein belongs to the peroxidase family. Peroxidase/catalase subfamily. Homodimer or homotetramer. Requires heme b as cofactor. In terms of processing, formation of the three residue Trp-Tyr-Met cross-link is important for the catalase, but not the peroxidase activity of the enzyme.

The enzyme catalyses H2O2 + AH2 = A + 2 H2O. It carries out the reaction 2 H2O2 = O2 + 2 H2O. Its function is as follows. Bifunctional enzyme with both catalase and broad-spectrum peroxidase activity. This is Catalase-peroxidase from Rhodococcus erythropolis (strain PR4 / NBRC 100887).